We begin with the raw amino-acid sequence, 171 residues long: Translationally-controlled tumor protein homolog (171 aa).

Residues 1 to 171 (MIIYKDIITG…FKDGLEIEKC (171 aa)) enclose the TCTP domain.

Belongs to the TCTP family.

The protein resides in the cytoplasm. Functionally, involved in calcium binding and microtubule stabilization. The polypeptide is Translationally-controlled tumor protein homolog (tpt1) (Danio rerio (Zebrafish)).